Consider the following 253-residue polypeptide: Thiamine import ATP-binding protein ThiQ (253 aa).

One can recognise an ABC transporter domain in the interval 8-236; it reads VRLDKVSFSY…AGPEAFRRYI (229 aa). ATP is bound at residue 38 to 45; it reads GPSGSGKS.

Belongs to the ABC transporter superfamily. Thiamine importer (TC 3.A.1.19.1) family. In terms of assembly, the complex is composed of two ATP-binding proteins (ThiQ), two transmembrane proteins (ThiP) and a solute-binding protein (ThiB).

The protein localises to the cell inner membrane. The enzyme catalyses thiamine(out) + ATP + H2O = thiamine(in) + ADP + phosphate + H(+). Part of the ABC transporter complex ThiBPQ involved in thiamine import. Responsible for energy coupling to the transport system. This is Thiamine import ATP-binding protein ThiQ from Mesorhizobium japonicum (strain LMG 29417 / CECT 9101 / MAFF 303099) (Mesorhizobium loti (strain MAFF 303099)).